The following is a 239-amino-acid chain: Ribonuclease PH (239 aa).

Residues Arg-86 and 124–126 (GTR) contribute to the phosphate site.

Belongs to the RNase PH family. In terms of assembly, homohexameric ring arranged as a trimer of dimers.

The catalysed reaction is tRNA(n+1) + phosphate = tRNA(n) + a ribonucleoside 5'-diphosphate. In terms of biological role, phosphorolytic 3'-5' exoribonuclease that plays an important role in tRNA 3'-end maturation. Removes nucleotide residues following the 3'-CCA terminus of tRNAs; can also add nucleotides to the ends of RNA molecules by using nucleoside diphosphates as substrates, but this may not be physiologically important. Probably plays a role in initiation of 16S rRNA degradation (leading to ribosome degradation) during starvation. The sequence is that of Ribonuclease PH from Rhizobium johnstonii (strain DSM 114642 / LMG 32736 / 3841) (Rhizobium leguminosarum bv. viciae).